A 270-amino-acid chain; its full sequence is FKBP-type peptidyl-prolyl cis-trans isomerase FkpA (270 aa).

The first 25 residues, 1–25, serve as a signal peptide directing secretion; sequence MKSLFKVTLLATTMAVALHAPITFA. Residues 164–249 enclose the PPIase FKBP-type domain; the sequence is SDTVVVNYKG…VFDVELLDVK (86 aa).

It belongs to the FKBP-type PPIase family.

It localises to the periplasm. The enzyme catalyses [protein]-peptidylproline (omega=180) = [protein]-peptidylproline (omega=0). Functionally, PPIases accelerate the folding of proteins. It catalyzes the cis-trans isomerization of proline imidic peptide bonds in oligopeptides. The sequence is that of FKBP-type peptidyl-prolyl cis-trans isomerase FkpA (fkpA) from Escherichia coli (strain K12).